The sequence spans 179 residues: Adenine phosphoribosyltransferase (179 aa).

It belongs to the purine/pyrimidine phosphoribosyltransferase family. Homodimer.

The protein localises to the cytoplasm. The enzyme catalyses AMP + diphosphate = 5-phospho-alpha-D-ribose 1-diphosphate + adenine. It participates in purine metabolism; AMP biosynthesis via salvage pathway; AMP from adenine: step 1/1. In terms of biological role, catalyzes a salvage reaction resulting in the formation of AMP, that is energically less costly than de novo synthesis. The protein is Adenine phosphoribosyltransferase of Bradyrhizobium sp. (strain ORS 278).